The sequence spans 741 residues: MALRDTSIPEPSGPVPPAPGACATAPPLDPTDRGRLLAGAHHDPHSLLGAHPVPGGIAFRVLRPFAREVGVVVDGERHTLASEEDGLFSGVLPLAGIPSYTLVVAYEQGETQETHDPYRFLPALGELDLHLIGEGRHEQLWQALGAEPMTHEGVTGTRFTVWAPNAQGVRVATDFTHWDGTAFPMRSLGSSGVWELFLPGVGEGTRYKFEIHSRYGHRFLKADPMARAAEEPPNTASVVTASRYEWGDAQWMRTRADTPVHEAPFSVYEVHLPSWRPGLTYRELAEELPAYVKDLGFTHVELMPVAEHPYGPSWGYQVTGFYAPTARLGSPDDFRFLVDALHRAGIGVIMDWVPAHFPKDDWALGRFDGDPLYEPGDSRRAEHPDWGTYTFDFARTEVRNFLVANAVYWCEEFHIDGLRVDAVASMLYLDYSRDSGQWEPNQYGGREDLAAMAFLQEMNATVYRRCPGVVTIAEESTAWGGVTRPTDTGGLGFGLKWNMGWMHDSLEYVAHEPVHRRYHHHEMTFSMVYAYSENYVLPISHDEVVHGKQALVSKMPGDWWQRRANVRAYLGFMWAHPGKQLLFMGQEFAQGAEWSEKQGPEWWLLDEGYHSAGDHRGVQDLVRELNTRYTRTPALWQRDTDPAGFRWVSVDAAEDNVFAFLRYGTDGTPLLAVSNFSPVVRHEYGLAVGDEAVAWQEVLNTDAEEYGGGGVGNPDPVKPEDGSIRITLPPLATVWLMPYAL.

A disordered region spans residues 1 to 38 (MALRDTSIPEPSGPVPPAPGACATAPPLDPTDRGRLLA). D421 acts as the Nucleophile in catalysis. E474 serves as the catalytic Proton donor.

The protein belongs to the glycosyl hydrolase 13 family. GlgB subfamily. In terms of assembly, monomer.

It catalyses the reaction Transfers a segment of a (1-&gt;4)-alpha-D-glucan chain to a primary hydroxy group in a similar glucan chain.. It participates in glycan biosynthesis; glycogen biosynthesis. Its function is as follows. Catalyzes the formation of the alpha-1,6-glucosidic linkages in glycogen by scission of a 1,4-alpha-linked oligosaccharide from growing alpha-1,4-glucan chains and the subsequent attachment of the oligosaccharide to the alpha-1,6 position. This Streptomyces coelicolor (strain ATCC BAA-471 / A3(2) / M145) protein is 1,4-alpha-glucan branching enzyme GlgB 2 (glgB2).